Here is a 399-residue protein sequence, read N- to C-terminus: Guanine nucleotide-binding protein negative regulator 1 (399 aa).

WD repeat units follow at residues 44-83 (KPLN…LSKK), 105-145 (YSYS…NKAS), 150-194 (DHQE…VMTT), 207-247 (SLKG…PCQL), 252-292 (ERGN…DMVY), and 296-337 (GHRG…EETH).

Interacts with gpa1.

The protein resides in the cytoplasm. Functionally, negatively regulates the pheromone-response pathway. Acts as a structural mimic of the G protein beta subunit thereby interacting with gpa1 which then inhibits gpa1 signaling. The protein is Guanine nucleotide-binding protein negative regulator 1 (gnr1) of Schizosaccharomyces pombe (strain 972 / ATCC 24843) (Fission yeast).